A 941-amino-acid chain; its full sequence is Cell wall protein IFF3 (941 aa).

An N-terminal signal peptide occupies residues 1–20 (MQLFQNILVSIALLTQVVFA). N-linked (GlcNAc...) asparagine glycosylation is found at Asn36, Asn367, Asn686, Asn732, Asn790, Asn818, Asn825, Asn884, and Asn917. Asn917 carries the GPI-anchor amidated asparagine lipid modification. Residues 918–941 (GSNKESIENIKYLTLVVFGLMMFM) constitute a propeptide, removed in mature form.

Belongs to the HYR1/IFF family. The GPI-anchor is attached to the protein in the endoplasmic reticulum and serves to target the protein to the cell surface. There, the glucosamine-inositol phospholipid moiety is cleaved off and the GPI-modified mannoprotein is covalently attached via its lipidless GPI glycan remnant to the 1,6-beta-glucan of the outer cell wall layer.

Its subcellular location is the secreted. It is found in the cell wall. The protein resides in the membrane. GPI-anchored cell wall protein involved in cell wall organization, hyphal growth, as well as in host-fungal interaction and virulence. This is Cell wall protein IFF3 (IFF3) from Candida albicans (strain SC5314 / ATCC MYA-2876) (Yeast).